The chain runs to 124 residues: uncharacterized protein (124 aa).

This is an uncharacterized protein from Lactobacillus acidophilus.